A 153-amino-acid polypeptide reads, in one-letter code: Glycosylation-dependent cell adhesion molecule 1 (153 aa).

Positions 1–18 are cleaved as a signal peptide; the sequence is MKFLCVLLLASLAATSLA. T34 is a glycosylation site (O-linked (GalNAc...) threonine; partial). Phosphoserine is present on residues S47, S52, S56, S58, and S64. S78 carries O-linked (HexNAc...) serine glycosylation. An N-linked (GlcNAc...) asparagine glycan is attached at N95. Residues 95–115 form a disordered region; the sequence is NATLGSEETTEHTPSDASTTE. An O-linked (GalNAc...) threonine glycan is attached at T104.

The protein belongs to the PP3/GlyCAM-1 family. Highly and specifically expressed in the lactating mammary gland.

Its subcellular location is the membrane. This Bos taurus (Bovine) protein is Glycosylation-dependent cell adhesion molecule 1 (GLYCAM1).